A 379-amino-acid polypeptide reads, in one-letter code: UDP-N-acetylglucosamine--N-acetylmuramyl-(pentapeptide) pyrophosphoryl-undecaprenol N-acetylglucosamine transferase (379 aa).

Residues 17–19, N128, R169, S197, and Q298 contribute to the UDP-N-acetyl-alpha-D-glucosamine site; that span reads TGG.

Belongs to the glycosyltransferase 28 family. MurG subfamily.

It localises to the cell inner membrane. It catalyses the reaction di-trans,octa-cis-undecaprenyl diphospho-N-acetyl-alpha-D-muramoyl-L-alanyl-D-glutamyl-meso-2,6-diaminopimeloyl-D-alanyl-D-alanine + UDP-N-acetyl-alpha-D-glucosamine = di-trans,octa-cis-undecaprenyl diphospho-[N-acetyl-alpha-D-glucosaminyl-(1-&gt;4)]-N-acetyl-alpha-D-muramoyl-L-alanyl-D-glutamyl-meso-2,6-diaminopimeloyl-D-alanyl-D-alanine + UDP + H(+). It functions in the pathway cell wall biogenesis; peptidoglycan biosynthesis. Functionally, cell wall formation. Catalyzes the transfer of a GlcNAc subunit on undecaprenyl-pyrophosphoryl-MurNAc-pentapeptide (lipid intermediate I) to form undecaprenyl-pyrophosphoryl-MurNAc-(pentapeptide)GlcNAc (lipid intermediate II). The chain is UDP-N-acetylglucosamine--N-acetylmuramyl-(pentapeptide) pyrophosphoryl-undecaprenol N-acetylglucosamine transferase from Brucella melitensis biotype 2 (strain ATCC 23457).